A 565-amino-acid polypeptide reads, in one-letter code: NAD-dependent malic enzyme (565 aa).

Tyrosine 104 functions as the Proton donor in the catalytic mechanism. Residue arginine 157 coordinates NAD(+). Lysine 175 acts as the Proton acceptor in catalysis. The a divalent metal cation site is built by glutamate 246, aspartate 247, and aspartate 270. Positions 270 and 418 each coordinate NAD(+).

This sequence belongs to the malic enzymes family. In terms of assembly, homotetramer. The cofactor is Mg(2+). Requires Mn(2+) as cofactor.

The enzyme catalyses (S)-malate + NAD(+) = pyruvate + CO2 + NADH. The catalysed reaction is oxaloacetate + H(+) = pyruvate + CO2. This is NAD-dependent malic enzyme from Shigella sonnei (strain Ss046).